The following is a 200-amino-acid chain: Signal peptidase complex catalytic subunit SEC11 (200 aa).

Residues 1-14 are Cytoplasmic-facing; the sequence is MFAELAPYLSNPRQ. Residues 15-33 form a helical; Signal-anchor for type II membrane protein membrane-spanning segment; the sequence is TLAQILNFALVLSTAFMGW. Residues 34 to 200 are Lumenal-facing; the sequence is KALSVYTNSP…MGVMVMLQRE (167 aa). Residues Ser53 and His92 each act as charge relay system in the active site. The segment at 101-129 is disordered; the sequence is GDGGNKSQRRLEREADKPSGPGLSSPLSH. N-linked (GlcNAc...) asparagine glycosylation occurs at Asn105. The span at 118 to 128 shows a compositional bias: low complexity; that stretch reads PSGPGLSSPLS. Asp142 acts as the Charge relay system in catalysis. The interval 186–197 is C-terminal short (CTS) helix; it reads VLLGIMGVMVML.

Belongs to the peptidase S26B family. In terms of assembly, component of the signal peptidase complex (SPC) composed of a catalytic subunit SEC11 and three accessory subunits SPC1, SPC2 and SPC3. The complex induces a local thinning of the ER membrane which is used to measure the length of the signal peptide (SP) h-region of protein substrates. This ensures the selectivity of the complex towards h-regions shorter than 18-20 amino acids. SPC associates with the translocon complex.

The protein localises to the endoplasmic reticulum membrane. It catalyses the reaction Cleavage of hydrophobic, N-terminal signal or leader sequences from secreted and periplasmic proteins.. In terms of biological role, catalytic component of the signal peptidase complex (SPC) which catalyzes the cleavage of N-terminal signal sequences from nascent proteins as they are translocated into the lumen of the endoplasmic reticulum. Specifically cleaves N-terminal signal peptides that contain a hydrophobic alpha-helix (h-region) shorter than 18-20 amino acids. The chain is Signal peptidase complex catalytic subunit SEC11 (SEC11) from Arthroderma otae (strain ATCC MYA-4605 / CBS 113480) (Microsporum canis).